A 340-amino-acid chain; its full sequence is tRNA N6-adenosine threonylcarbamoyltransferase (340 aa).

Residues histidine 111 and histidine 115 each contribute to the Fe cation site. Substrate contacts are provided by residues 134 to 138 (LVSGG), aspartate 167, glycine 180, and asparagine 276. Aspartate 304 provides a ligand contact to Fe cation.

Belongs to the KAE1 / TsaD family. The cofactor is Fe(2+).

The protein localises to the cytoplasm. The enzyme catalyses L-threonylcarbamoyladenylate + adenosine(37) in tRNA = N(6)-L-threonylcarbamoyladenosine(37) in tRNA + AMP + H(+). In terms of biological role, required for the formation of a threonylcarbamoyl group on adenosine at position 37 (t(6)A37) in tRNAs that read codons beginning with adenine. Is involved in the transfer of the threonylcarbamoyl moiety of threonylcarbamoyl-AMP (TC-AMP) to the N6 group of A37, together with TsaE and TsaB. TsaD likely plays a direct catalytic role in this reaction. In Helicobacter pylori (strain ATCC 700392 / 26695) (Campylobacter pylori), this protein is tRNA N6-adenosine threonylcarbamoyltransferase.